We begin with the raw amino-acid sequence, 173 residues long: Chorion class B protein Ld32 (173 aa).

Positions 1–7 (FVQSALS) are cleaved as a signal peptide.

This sequence belongs to the chorion protein family.

Functionally, this protein is one of many from the eggshell of the gypsy moth. The sequence is that of Chorion class B protein Ld32 from Lymantria dispar (Gypsy moth).